The sequence spans 574 residues: FAD-linked oxidoreductase sor8 (574 aa).

The signal sequence occupies residues 1-27 (MYAPPFVRAFGIAVLAVLPSFSSPATA). N-linked (GlcNAc...) asparagine glycans are attached at residues Asn58, Asn112, Asn136, Asn266, Asn312, Asn363, and Asn384. Residues 126-305 (VIGTYVQYAV…YSMTVKAHAN (180 aa)) enclose the FAD-binding PCMH-type domain.

This sequence belongs to the oxygen-dependent FAD-linked oxidoreductase family. Requires FAD as cofactor.

It functions in the pathway secondary metabolite biosynthesis. FAD-linked oxidoreductase; part of the SOR gene cluster that mediates the biosynthesis of sorbicillinoids, a diverse group of yellow secondary metabolites that restrict growth of competing pathogenic fungi but not of bacteria. Sorbicillinoids biosynthesis requires the action of two PKSs. The SOR cluster is required for the production of trichodimerol and dihydrotrichotetronin, with sor2 being sufficient for production of trichodimerol, but not dihydrotrichotetronin in the light. Sor1 iteratively combines three acetyl units and the growing chain is modified by the ketoacyl reductase subunit, and optional by the enoyl reductase subunit in the second cycle. The polyketide is then handed over to the PKS sor2, which adds three more acetyl units, and two methyl groups. Sor2 releases an aldehyde, which undergoes spontaneous cyclization resulting in the formation of sorbicillin or 2',3'-dihydrosorbicillin. The monooxygenase sor5 oxidizes sorbicillin and 2',3'-dihydrosorbicillin to 2',3'-dihydrosorbicillinol and sorbicillinol, respectively. The oxidoreductase sor8 further converts sorbicillinol into oxosorbicillinol. Sorbicillinol is the building block for the other sorbicillinoids such as disorbicillinol, bisvertinolon, dihydrobisvertinolone, and dihydrotrichotetronine. The polypeptide is FAD-linked oxidoreductase sor8 (Hypocrea jecorina (strain QM6a) (Trichoderma reesei)).